The following is a 438-amino-acid chain: Adenosylhomocysteinase (438 aa).

T61, D137, and E162 together coordinate substrate. Position 163–165 (163–165) interacts with NAD(+); it reads TTT. Residues K192 and D196 each contribute to the substrate site. NAD(+)-binding positions include N197, 226–231, E249, N284, 305–307, and N352; these read GYGDVG and IGH.

This sequence belongs to the adenosylhomocysteinase family. Requires NAD(+) as cofactor.

It localises to the cytoplasm. The enzyme catalyses S-adenosyl-L-homocysteine + H2O = L-homocysteine + adenosine. The protein operates within amino-acid biosynthesis; L-homocysteine biosynthesis; L-homocysteine from S-adenosyl-L-homocysteine: step 1/1. May play a key role in the regulation of the intracellular concentration of adenosylhomocysteine. This Christiangramia forsetii (strain DSM 17595 / CGMCC 1.15422 / KT0803) (Gramella forsetii) protein is Adenosylhomocysteinase.